The following is a 412-amino-acid chain: Short-chain specific acyl-CoA dehydrogenase, mitochondrial (412 aa).

Residues 1–24 constitute a mitochondrion transit peptide; that stretch reads MAATLLARACGLVRGAPWPWGWRR. At Thr-27 the chain carries Phosphothreonine. Position 51 is an N6-acetyllysine; alternate (Lys-51). The residue at position 51 (Lys-51) is an N6-succinyllysine; alternate. Residue Lys-72 is modified to N6-acetyllysine. Lys-129 is modified (N6-acetyllysine; alternate). At Lys-129 the chain carries N6-succinyllysine; alternate. FAD is bound by residues 152–161 and 185–187; these read FALSEPGNGS and WIT. Residue Ser-161 coordinates substrate. Lys-208 carries the post-translational modification N6-acetyllysine. The residue at position 262 (Lys-262) is an N6-acetyllysine; alternate. The residue at position 262 (Lys-262) is an N6-succinyllysine; alternate. A substrate-binding site is contributed by 269 to 272; that stretch reads DTGR. Arg-297 contacts FAD. Lys-306 is modified (N6-acetyllysine; alternate). An N6-succinyllysine; alternate modification is found at Lys-306. FAD-binding positions include Gln-308 and 365-369; that span reads QILGG. The active-site Proton acceptor is the Glu-392. Gly-393 contacts substrate. 394–396 contacts FAD; it reads TSE.

This sequence belongs to the acyl-CoA dehydrogenase family. Homotetramer. It depends on FAD as a cofactor.

The protein localises to the mitochondrion matrix. The enzyme catalyses a short-chain 2,3-saturated fatty acyl-CoA + oxidized [electron-transfer flavoprotein] + H(+) = a short-chain (2E)-enoyl-CoA + reduced [electron-transfer flavoprotein]. The catalysed reaction is butanoyl-CoA + oxidized [electron-transfer flavoprotein] + H(+) = (2E)-butenoyl-CoA + reduced [electron-transfer flavoprotein]. It carries out the reaction pentanoyl-CoA + oxidized [electron-transfer flavoprotein] + H(+) = (2E)-pentenoyl-CoA + reduced [electron-transfer flavoprotein]. It catalyses the reaction hexanoyl-CoA + oxidized [electron-transfer flavoprotein] + H(+) = (2E)-hexenoyl-CoA + reduced [electron-transfer flavoprotein]. Its pathway is lipid metabolism; mitochondrial fatty acid beta-oxidation. Functionally, short-chain specific acyl-CoA dehydrogenase is one of the acyl-CoA dehydrogenases that catalyze the first step of mitochondrial fatty acid beta-oxidation, an aerobic process breaking down fatty acids into acetyl-CoA and allowing the production of energy from fats. The first step of fatty acid beta-oxidation consists in the removal of one hydrogen from C-2 and C-3 of the straight-chain fatty acyl-CoA thioester, resulting in the formation of trans-2-enoyl-CoA. Among the different mitochondrial acyl-CoA dehydrogenases, short-chain specific acyl-CoA dehydrogenase acts specifically on acyl-CoAs with saturated 4 to 6 carbons long primary chains. In Bos taurus (Bovine), this protein is Short-chain specific acyl-CoA dehydrogenase, mitochondrial (ACADS).